The chain runs to 94 residues: Acylphosphatase (94 aa).

One can recognise an Acylphosphatase-like domain in the interval 6–92 (RVHVWIRGRV…EGLPTFEIRP (87 aa)). Residues Arg-21 and Asn-39 contribute to the active site.

It belongs to the acylphosphatase family.

It catalyses the reaction an acyl phosphate + H2O = a carboxylate + phosphate + H(+). The protein is Acylphosphatase (acyP) of Synechococcus sp. (strain JA-2-3B'a(2-13)) (Cyanobacteria bacterium Yellowstone B-Prime).